We begin with the raw amino-acid sequence, 117 residues long: Large ribosomal subunit protein uL24 (117 aa).

It belongs to the universal ribosomal protein uL24 family. In terms of assembly, part of the 50S ribosomal subunit.

Functionally, one of two assembly initiator proteins, it binds directly to the 5'-end of the 23S rRNA, where it nucleates assembly of the 50S subunit. Its function is as follows. Located at the polypeptide exit tunnel on the outside of the subunit. This Methanothermobacter thermautotrophicus (strain ATCC 29096 / DSM 1053 / JCM 10044 / NBRC 100330 / Delta H) (Methanobacterium thermoautotrophicum) protein is Large ribosomal subunit protein uL24.